The sequence spans 20 residues: FLSLALAALPKFLCLVFKKC.

C14 and C20 form a disulfide bridge.

As to expression, expressed by the skin glands.

It localises to the secreted. Functionally, antimicrobial peptide. Has low activity against the Gram-positive bacterium S.aureus and the Gram-negative bacterium E.coli (MIC&lt;15 uM). Has a strong hemolytic activity. The chain is Brevinin-1DYa from Rana dybowskii (Dybovsky's frog).